Consider the following 428-residue polypeptide: D-inositol 3-phosphate glycosyltransferase (428 aa).

Position 17 (H17) interacts with 1D-myo-inositol 3-phosphate. UDP-N-acetyl-alpha-D-glucosamine-binding positions include 23-24 and G31; that span reads QP. 1D-myo-inositol 3-phosphate-binding positions include 28 to 33, R86, Y119, T143, and R163; that span reads DAGGMN. UDP-N-acetyl-alpha-D-glucosamine-binding residues include R237 and K242. Mg(2+) is bound by residues Y312, R313, and A315. 2 residues coordinate UDP-N-acetyl-alpha-D-glucosamine: E325 and E333. T339 is a binding site for Mg(2+).

The protein belongs to the glycosyltransferase group 1 family. MshA subfamily. As to quaternary structure, homodimer.

It catalyses the reaction 1D-myo-inositol 3-phosphate + UDP-N-acetyl-alpha-D-glucosamine = 1D-myo-inositol 2-acetamido-2-deoxy-alpha-D-glucopyranoside 3-phosphate + UDP + H(+). Its function is as follows. Catalyzes the transfer of a N-acetyl-glucosamine moiety to 1D-myo-inositol 3-phosphate to produce 1D-myo-inositol 2-acetamido-2-deoxy-glucopyranoside 3-phosphate in the mycothiol biosynthesis pathway. The chain is D-inositol 3-phosphate glycosyltransferase from Thermobispora bispora (strain ATCC 19993 / DSM 43833 / CBS 139.67 / JCM 10125 / KCTC 9307 / NBRC 14880 / R51).